Reading from the N-terminus, the 724-residue chain is Catalase-peroxidase (724 aa).

The segment at residues 98 to 226 (WHSAGTYRIA…LAAVMMGLIY (129 aa)) is a cross-link (tryptophyl-tyrosyl-methioninium (Trp-Tyr) (with M-252)). The active-site Proton acceptor is histidine 99. Positions 226–252 (YVNPEGVDGNPDPLKTAQDMRVTFARM) form a cross-link, tryptophyl-tyrosyl-methioninium (Tyr-Met) (with W-98). Position 267 (histidine 267) interacts with heme b.

It belongs to the peroxidase family. Peroxidase/catalase subfamily. In terms of assembly, homodimer or homotetramer. Heme b is required as a cofactor. Formation of the three residue Trp-Tyr-Met cross-link is important for the catalase, but not the peroxidase activity of the enzyme.

The enzyme catalyses H2O2 + AH2 = A + 2 H2O. It carries out the reaction 2 H2O2 = O2 + 2 H2O. In terms of biological role, bifunctional enzyme with both catalase and broad-spectrum peroxidase activity. The chain is Catalase-peroxidase from Vibrio cholerae serotype O1 (strain ATCC 39315 / El Tor Inaba N16961).